A 420-amino-acid polypeptide reads, in one-letter code: Signal recognition particle receptor FtsY (420 aa).

Basic and acidic residues predominate over residues 28 to 62 (DLDRAMGKVAPDNKKTRDAKAAADARLAAEAEEAK). Residues 28 to 118 (DLDRAMGKVA…PETPESVGSR (91 aa)) are disordered. Positions 63–104 (AATAAEPAKSAESAKAEPAPAAQAEPEPAAAPKPESQPASKP) are enriched in low complexity. GTP is bound by residues 227-234 (GVNGTGKT), 310-314 (DTAGR), and 372-375 (SKLD).

Belongs to the GTP-binding SRP family. FtsY subfamily. Part of the signal recognition particle protein translocation system, which is composed of SRP and FtsY.

It localises to the cell membrane. It is found in the cytoplasm. It carries out the reaction GTP + H2O = GDP + phosphate + H(+). Functionally, involved in targeting and insertion of nascent membrane proteins into the cytoplasmic membrane. Acts as a receptor for the complex formed by the signal recognition particle (SRP) and the ribosome-nascent chain (RNC). In Bifidobacterium longum (strain NCC 2705), this protein is Signal recognition particle receptor FtsY.